A 208-amino-acid polypeptide reads, in one-letter code: Imidazole glycerol phosphate synthase subunit HisH (208 aa).

The region spanning 1-206 (MIVIIDYDTG…KEVTYSCKSS (206 aa)) is the Glutamine amidotransferase type-1 domain. C79 serves as the catalytic Nucleophile. Active-site residues include H181 and E183.

In terms of assembly, heterodimer of HisH and HisF.

The protein resides in the cytoplasm. It carries out the reaction 5-[(5-phospho-1-deoxy-D-ribulos-1-ylimino)methylamino]-1-(5-phospho-beta-D-ribosyl)imidazole-4-carboxamide + L-glutamine = D-erythro-1-(imidazol-4-yl)glycerol 3-phosphate + 5-amino-1-(5-phospho-beta-D-ribosyl)imidazole-4-carboxamide + L-glutamate + H(+). The catalysed reaction is L-glutamine + H2O = L-glutamate + NH4(+). It participates in amino-acid biosynthesis; L-histidine biosynthesis; L-histidine from 5-phospho-alpha-D-ribose 1-diphosphate: step 5/9. Functionally, IGPS catalyzes the conversion of PRFAR and glutamine to IGP, AICAR and glutamate. The HisH subunit catalyzes the hydrolysis of glutamine to glutamate and ammonia as part of the synthesis of IGP and AICAR. The resulting ammonia molecule is channeled to the active site of HisF. This chain is Imidazole glycerol phosphate synthase subunit HisH, found in Listeria monocytogenes serovar 1/2a (strain ATCC BAA-679 / EGD-e).